A 154-amino-acid chain; its full sequence is S-ribosylhomocysteine lyase (154 aa).

Residues histidine 57, histidine 61, and cysteine 124 each coordinate Fe cation.

The protein belongs to the LuxS family. As to quaternary structure, homodimer. Requires Fe cation as cofactor.

The catalysed reaction is S-(5-deoxy-D-ribos-5-yl)-L-homocysteine = (S)-4,5-dihydroxypentane-2,3-dione + L-homocysteine. Its function is as follows. Involved in the synthesis of autoinducer 2 (AI-2) which is secreted by bacteria and is used to communicate both the cell density and the metabolic potential of the environment. The regulation of gene expression in response to changes in cell density is called quorum sensing. Catalyzes the transformation of S-ribosylhomocysteine (RHC) to homocysteine (HC) and 4,5-dihydroxy-2,3-pentadione (DPD). The sequence is that of S-ribosylhomocysteine lyase from Exiguobacterium sibiricum (strain DSM 17290 / CCUG 55495 / CIP 109462 / JCM 13490 / 255-15).